A 129-amino-acid polypeptide reads, in one-letter code: Glycine cleavage system H protein (129 aa).

One can recognise a Lipoyl-binding domain in the interval 24 to 106 (TYTVGITEHA…YGQGWIFKIK (83 aa)). The residue at position 65 (Lys65) is an N6-lipoyllysine.

This sequence belongs to the GcvH family. As to quaternary structure, the glycine cleavage system is composed of four proteins: P, T, L and H. It depends on (R)-lipoate as a cofactor.

In terms of biological role, the glycine cleavage system catalyzes the degradation of glycine. The H protein shuttles the methylamine group of glycine from the P protein to the T protein. In Cronobacter sakazakii (strain ATCC BAA-894) (Enterobacter sakazakii), this protein is Glycine cleavage system H protein.